The primary structure comprises 532 residues: Membrane protein insertase YidC (532 aa).

Transmembrane regions (helical) follow at residues phenylalanine 7 to methionine 27, leucine 336 to isoleucine 356, glycine 413 to isoleucine 433, leucine 450 to isoleucine 470, and proline 492 to isoleucine 512.

The protein belongs to the OXA1/ALB3/YidC family. Type 1 subfamily. As to quaternary structure, interacts with the Sec translocase complex via SecD. Specifically interacts with transmembrane segments of nascent integral membrane proteins during membrane integration.

The protein localises to the cell membrane. Its function is as follows. Required for the insertion and/or proper folding and/or complex formation of integral membrane proteins into the membrane. Involved in integration of membrane proteins that insert both dependently and independently of the Sec translocase complex, as well as at least some lipoproteins. Aids folding of multispanning membrane proteins. The polypeptide is Membrane protein insertase YidC (Buchnera aphidicola subsp. Acyrthosiphon pisum (strain Tuc7)).